A 214-amino-acid chain; its full sequence is Redox-sensing transcriptional repressor Rex (214 aa).

Positions leucine 17 to phenylalanine 56 form a DNA-binding region, H-T-H motif. Glycine 91–glycine 96 serves as a coordination point for NAD(+).

This sequence belongs to the transcriptional regulatory Rex family. In terms of assembly, homodimer.

The protein resides in the cytoplasm. Modulates transcription in response to changes in cellular NADH/NAD(+) redox state. This is Redox-sensing transcriptional repressor Rex from Streptococcus equi subsp. zooepidemicus (strain H70).